The sequence spans 425 residues: Riboflavin biosynthesis protein RibBA (425 aa).

The interval 1–204 (MTRLDSVERA…IADLIEWRRK (204 aa)) is DHBP synthase. D-ribulose 5-phosphate contacts are provided by residues 28-29 (RE), D33, 141-145 (RPGHT), and E165. E29 serves as a coordination point for Mg(2+). H144 serves as a coordination point for Mg(2+). Positions 205-425 (HEKHIERIAE…HLPGEFGGAL (221 aa)) are GTP cyclohydrolase II. Position 259–263 (259–263 (RVHSE)) interacts with GTP. Zn(2+) contacts are provided by C264, C275, and C277. GTP is bound by residues Q280, 303-305 (EGR), and T325. The active-site Proton acceptor; for GTP cyclohydrolase activity is the D337. R339 acts as the Nucleophile; for GTP cyclohydrolase activity in catalysis. The GTP site is built by T360 and K365.

It in the N-terminal section; belongs to the DHBP synthase family. In the C-terminal section; belongs to the GTP cyclohydrolase II family. Mg(2+) serves as cofactor. Requires Mn(2+) as cofactor. Zn(2+) is required as a cofactor.

The catalysed reaction is D-ribulose 5-phosphate = (2S)-2-hydroxy-3-oxobutyl phosphate + formate + H(+). It carries out the reaction GTP + 4 H2O = 2,5-diamino-6-hydroxy-4-(5-phosphoribosylamino)-pyrimidine + formate + 2 phosphate + 3 H(+). Its pathway is cofactor biosynthesis; riboflavin biosynthesis; 2-hydroxy-3-oxobutyl phosphate from D-ribulose 5-phosphate: step 1/1. It functions in the pathway cofactor biosynthesis; riboflavin biosynthesis; 5-amino-6-(D-ribitylamino)uracil from GTP: step 1/4. Catalyzes the conversion of D-ribulose 5-phosphate to formate and 3,4-dihydroxy-2-butanone 4-phosphate. Its function is as follows. Catalyzes the conversion of GTP to 2,5-diamino-6-ribosylamino-4(3H)-pyrimidinone 5'-phosphate (DARP), formate and pyrophosphate. This Mycolicibacterium paratuberculosis (strain ATCC BAA-968 / K-10) (Mycobacterium paratuberculosis) protein is Riboflavin biosynthesis protein RibBA.